The following is a 244-amino-acid chain: rRNA adenine N-6-methyltransferase (244 aa).

S-adenosyl-L-methionine contacts are provided by Asn-11, Ile-13, Gly-38, Glu-59, Asp-84, and Asn-101.

The protein belongs to the class I-like SAM-binding methyltransferase superfamily. rRNA adenine N(6)-methyltransferase family.

It carries out the reaction adenosine(2085) in 23S rRNA + 2 S-adenosyl-L-methionine = N(6)-dimethyladenosine(2085) in 23S rRNA + 2 S-adenosyl-L-homocysteine + 2 H(+). In terms of biological role, this protein produces a dimethylation of the adenine residue at position 2085 in 23S rRNA, resulting in reduced affinity between ribosomes and macrolide-lincosamide-streptogramin B antibiotics. The polypeptide is rRNA adenine N-6-methyltransferase (ermC) (Staphylococcus aureus).